A 93-amino-acid polypeptide reads, in one-letter code: Ferredoxin-2 (93 aa).

Residues 2–91 form the 2Fe-2S ferredoxin-type domain; that stretch reads YKVTLKTPDG…DVVIETHKED (90 aa). Residues cysteine 37, cysteine 42, cysteine 45, and cysteine 75 each coordinate [2Fe-2S] cluster.

Belongs to the 2Fe2S plant-type ferredoxin family. Requires [2Fe-2S] cluster as cofactor.

The protein resides in the plastid. Its subcellular location is the chloroplast. Its function is as follows. Ferredoxins are iron-sulfur proteins that transfer electrons in a wide variety of metabolic reactions. This Equisetum arvense (Field horsetail) protein is Ferredoxin-2.